A 707-amino-acid polypeptide reads, in one-letter code: Polyribonucleotide nucleotidyltransferase (707 aa).

The Mg(2+) site is built by Asp-488 and Asp-494. Positions 555–614 constitute a KH domain; that stretch reads PRLYVMKINPEKIRDVIGKGGAVIRALTEETGTQINIEEDGTITIASNDSAKADEAKRRI. The region spanning 624-692 is the S1 motif domain; it reads GKVYEGAITK…EKGRVKLSMK (69 aa).

This sequence belongs to the polyribonucleotide nucleotidyltransferase family. The cofactor is Mg(2+).

The protein localises to the cytoplasm. It carries out the reaction RNA(n+1) + phosphate = RNA(n) + a ribonucleoside 5'-diphosphate. Its function is as follows. Involved in mRNA degradation. Catalyzes the phosphorolysis of single-stranded polyribonucleotides processively in the 3'- to 5'-direction. The protein is Polyribonucleotide nucleotidyltransferase of Polaromonas sp. (strain JS666 / ATCC BAA-500).